Reading from the N-terminus, the 296-residue chain is Bifunctional protein FolD (296 aa).

NADP(+)-binding positions include 170 to 172 (GRS) and S195.

It belongs to the tetrahydrofolate dehydrogenase/cyclohydrolase family. Homodimer.

The catalysed reaction is (6R)-5,10-methylene-5,6,7,8-tetrahydrofolate + NADP(+) = (6R)-5,10-methenyltetrahydrofolate + NADPH. The enzyme catalyses (6R)-5,10-methenyltetrahydrofolate + H2O = (6R)-10-formyltetrahydrofolate + H(+). Its pathway is one-carbon metabolism; tetrahydrofolate interconversion. Its function is as follows. Catalyzes the oxidation of 5,10-methylenetetrahydrofolate to 5,10-methenyltetrahydrofolate and then the hydrolysis of 5,10-methenyltetrahydrofolate to 10-formyltetrahydrofolate. This is Bifunctional protein FolD from Rhodospirillum rubrum (strain ATCC 11170 / ATH 1.1.1 / DSM 467 / LMG 4362 / NCIMB 8255 / S1).